Reading from the N-terminus, the 227-residue chain is MAYPFQLGLQDATSPIMEELLHFHDHTLMIVFLISSLILYIISLMLTTKLTHTSTMDAQEVETVWTILPAIILILIALPSLRILYMMDEINNPSLTVKTMGHQWYWSYEYTDYEDLNFDSYMIPTQELKPGELRLLEVDNRVVLPMEMTIRMLISSEDVLHSWAVPSLGLKTDAIPGRLNQTTLMATRPGLYYGQCSEICGSNHSFMPIVLEMVPLSYFETWSALMV.

The Mitochondrial intermembrane segment spans residues 1 to 14; it reads MAYPFQLGLQDATS. The helical transmembrane segment at 15–45 threads the bilayer; the sequence is PIMEELLHFHDHTLMIVFLISSLILYIISLM. At 46 to 59 the chain is on the mitochondrial matrix side; that stretch reads LTTKLTHTSTMDAQ. Residues 60 to 87 traverse the membrane as a helical segment; sequence EVETVWTILPAIILILIALPSLRILYMM. The Mitochondrial intermembrane portion of the chain corresponds to 88-227; it reads DEINNPSLTV…YFETWSALMV (140 aa). Residues H161, C196, E198, C200, H204, and M207 each coordinate Cu cation. E198 serves as a coordination point for Mg(2+). Y218 is modified (phosphotyrosine).

Belongs to the cytochrome c oxidase subunit 2 family. As to quaternary structure, component of the cytochrome c oxidase (complex IV, CIV), a multisubunit enzyme composed of 14 subunits. The complex is composed of a catalytic core of 3 subunits MT-CO1, MT-CO2 and MT-CO3, encoded in the mitochondrial DNA, and 11 supernumerary subunits COX4I, COX5A, COX5B, COX6A, COX6B, COX6C, COX7A, COX7B, COX7C, COX8 and NDUFA4, which are encoded in the nuclear genome. The complex exists as a monomer or a dimer and forms supercomplexes (SCs) in the inner mitochondrial membrane with NADH-ubiquinone oxidoreductase (complex I, CI) and ubiquinol-cytochrome c oxidoreductase (cytochrome b-c1 complex, complex III, CIII), resulting in different assemblies (supercomplex SCI(1)III(2)IV(1) and megacomplex MCI(2)III(2)IV(2)). Found in a complex with TMEM177, COA6, COX18, COX20, SCO1 and SCO2. Interacts with TMEM177 in a COX20-dependent manner. Interacts with COX20. Interacts with COX16. Cu cation is required as a cofactor.

Its subcellular location is the mitochondrion inner membrane. It catalyses the reaction 4 Fe(II)-[cytochrome c] + O2 + 8 H(+)(in) = 4 Fe(III)-[cytochrome c] + 2 H2O + 4 H(+)(out). In terms of biological role, component of the cytochrome c oxidase, the last enzyme in the mitochondrial electron transport chain which drives oxidative phosphorylation. The respiratory chain contains 3 multisubunit complexes succinate dehydrogenase (complex II, CII), ubiquinol-cytochrome c oxidoreductase (cytochrome b-c1 complex, complex III, CIII) and cytochrome c oxidase (complex IV, CIV), that cooperate to transfer electrons derived from NADH and succinate to molecular oxygen, creating an electrochemical gradient over the inner membrane that drives transmembrane transport and the ATP synthase. Cytochrome c oxidase is the component of the respiratory chain that catalyzes the reduction of oxygen to water. Electrons originating from reduced cytochrome c in the intermembrane space (IMS) are transferred via the dinuclear copper A center (CU(A)) of subunit 2 and heme A of subunit 1 to the active site in subunit 1, a binuclear center (BNC) formed by heme A3 and copper B (CU(B)). The BNC reduces molecular oxygen to 2 water molecules using 4 electrons from cytochrome c in the IMS and 4 protons from the mitochondrial matrix. The protein is Cytochrome c oxidase subunit 2 (MT-CO2) of Canis simensis (Ethiopian wolf).